The primary structure comprises 449 residues: Adenylosuccinate synthetase (449 aa).

GTP is bound by residues 12-18 and 40-42; these read GDEGKGK and GHT. The Proton acceptor role is filled by Asp-13. Mg(2+)-binding residues include Asp-13 and Gly-40. IMP-binding positions include 13–16, 38–41, Thr-128, Arg-142, Gln-223, Thr-238, and Arg-302; these read DEGK and NAGH. The active-site Proton donor is the His-41. 298–304 is a substrate binding site; that stretch reads TTTGRQR. Residues Arg-304, 330–332, and 412–414 each bind GTP; these read KLD and SLG.

It belongs to the adenylosuccinate synthetase family. As to quaternary structure, homodimer. Mg(2+) is required as a cofactor.

The protein localises to the cytoplasm. It carries out the reaction IMP + L-aspartate + GTP = N(6)-(1,2-dicarboxyethyl)-AMP + GDP + phosphate + 2 H(+). It participates in purine metabolism; AMP biosynthesis via de novo pathway; AMP from IMP: step 1/2. Its function is as follows. Plays an important role in the de novo pathway of purine nucleotide biosynthesis. Catalyzes the first committed step in the biosynthesis of AMP from IMP. The protein is Adenylosuccinate synthetase of Synechococcus sp. (strain JA-2-3B'a(2-13)) (Cyanobacteria bacterium Yellowstone B-Prime).